The chain runs to 937 residues: uncharacterized protein (937 aa).

An N-acetylthreonine modification is found at Thr2. The tract at residues 281–937 is disordered; the sequence is NESPSSNINT…KKGKGKGGRK (657 aa). Residues 290–308 are compositionally biased toward low complexity; it reads TTTTSTTTTTTTTTSSPVV. Thr292 (charge relay system) is an active-site residue. Composition is skewed to basic and acidic residues over residues 309 to 402, 411 to 431, 469 to 489, 512 to 532, 600 to 615, 667 to 687, 738 to 758, and 780 to 872; these read EESK…EKQQ, AEKERLEKEEADKLEKERLEA, AEKERLEKEEADRLEKEKLEA, AEKERLEKEETERLEKEKLEA, AEKEEAERLEKEKLEA, AEKERLEKEEAERLEKEKLEA, AEKERLEKEETERLEKERLEA, and AEKE…KVEE. A coiled-coil region spans residues 345 to 802; it reads VDDSKEKEEK…KAAEETKVEE (458 aa). A compositionally biased stretch (acidic residues) spans 887–897; it reads EETEEGEEVDE. A compositionally biased stretch (low complexity) spans 898 to 924; it reads ASNTTTEQTTTNANQPKKPNNNNNNNK. Residues 925–937 show a composition bias toward basic residues; it reads GKGKKGKGKGGRK.

This sequence belongs to the AB hydrolase superfamily.

This is an uncharacterized protein from Dictyostelium discoideum (Social amoeba).